A 507-amino-acid chain; its full sequence is UDP-N-acetylmuramoyl-L-alanyl-D-glutamate--2,6-diaminopimelate ligase (507 aa).

S32 contributes to the UDP-N-acetyl-alpha-D-muramoyl-L-alanyl-D-glutamate binding site. Residue G117 to T123 participates in ATP binding. UDP-N-acetyl-alpha-D-muramoyl-L-alanyl-D-glutamate is bound by residues T159–T160, S186, Q192, and R194. K226 is subject to N6-carboxylysine. Meso-2,6-diaminopimelate is bound by residues R400, D424–R427, G475, and E479. A Meso-diaminopimelate recognition motif motif is present at residues D424 to R427.

The protein belongs to the MurCDEF family. MurE subfamily. Mg(2+) serves as cofactor. In terms of processing, carboxylation is probably crucial for Mg(2+) binding and, consequently, for the gamma-phosphate positioning of ATP.

It localises to the cytoplasm. The enzyme catalyses UDP-N-acetyl-alpha-D-muramoyl-L-alanyl-D-glutamate + meso-2,6-diaminopimelate + ATP = UDP-N-acetyl-alpha-D-muramoyl-L-alanyl-gamma-D-glutamyl-meso-2,6-diaminopimelate + ADP + phosphate + H(+). The protein operates within cell wall biogenesis; peptidoglycan biosynthesis. In terms of biological role, catalyzes the addition of meso-diaminopimelic acid to the nucleotide precursor UDP-N-acetylmuramoyl-L-alanyl-D-glutamate (UMAG) in the biosynthesis of bacterial cell-wall peptidoglycan. The polypeptide is UDP-N-acetylmuramoyl-L-alanyl-D-glutamate--2,6-diaminopimelate ligase (Prochlorococcus marinus (strain MIT 9313)).